Reading from the N-terminus, the 172-residue chain is Probable chorismate pyruvate-lyase (172 aa).

The substrate site is built by methionine 37, arginine 79, leucine 117, and glutamate 158.

This sequence belongs to the UbiC family.

The protein localises to the cytoplasm. The enzyme catalyses chorismate = 4-hydroxybenzoate + pyruvate. Its pathway is cofactor biosynthesis; ubiquinone biosynthesis. Functionally, removes the pyruvyl group from chorismate, with concomitant aromatization of the ring, to provide 4-hydroxybenzoate (4HB) for the ubiquinone pathway. The protein is Probable chorismate pyruvate-lyase of Bartonella quintana (strain Toulouse) (Rochalimaea quintana).